A 281-amino-acid chain; its full sequence is Probable ABC transporter ATP-binding protein AZC_3926 (281 aa).

A disordered region spans residues 1–38 (MNVLSMFGRNATRETSSPAATAGRYADEGDWEGDDHQP). Residues 45–277 (LAAFGLAKSY…PDVRRLYLGE (233 aa)) enclose the ABC transporter domain. 77 to 84 (GPNGAGKT) is an ATP binding site.

This sequence belongs to the ABC transporter superfamily.

The chain is Probable ABC transporter ATP-binding protein AZC_3926 from Azorhizobium caulinodans (strain ATCC 43989 / DSM 5975 / JCM 20966 / LMG 6465 / NBRC 14845 / NCIMB 13405 / ORS 571).